A 287-amino-acid polypeptide reads, in one-letter code: Glutamate racemase (287 aa).

Residues 1 to 15 (MATKPQDANTTSREA) are compositionally biased toward polar residues. The disordered stretch occupies residues 1–25 (MATKPQDANTTSREAITSKADSPPR). Residues 32–33 (DS) and 64–65 (YG) contribute to the substrate site. Cys96 serves as the catalytic Proton donor/acceptor. Substrate is bound at residue 97 to 98 (NT). Cys208 (proton donor/acceptor) is an active-site residue. A substrate-binding site is contributed by 209 to 210 (TH).

Belongs to the aspartate/glutamate racemases family.

It carries out the reaction L-glutamate = D-glutamate. The protein operates within cell wall biogenesis; peptidoglycan biosynthesis. Its function is as follows. Provides the (R)-glutamate required for cell wall biosynthesis. This Yersinia pseudotuberculosis serotype IB (strain PB1/+) protein is Glutamate racemase.